The following is a 218-amino-acid chain: Small ribosomal subunit protein uS3c (218 aa).

Positions 47–118 constitute a KH type-2 domain; sequence VQKNLKISSG…KLNITITRIA (72 aa).

It belongs to the universal ribosomal protein uS3 family. In terms of assembly, part of the 30S ribosomal subunit.

It is found in the plastid. Its subcellular location is the chloroplast. This is Small ribosomal subunit protein uS3c (rps3) from Daucus carota (Wild carrot).